The primary structure comprises 275 residues: Membrane protein insertase YidC 1 (275 aa).

The signal sequence occupies residues 1–25 (MRKVLRVKKNIKIARIVPLVLLLVA). Cysteine 26 carries N-palmitoyl cysteine lipidation. The S-diacylglycerol cysteine moiety is linked to residue cysteine 26. The next 5 membrane-spanning stretches (helical) occupy residues 58 to 78 (SIGV…MPLF), 129 to 149 (YASL…FQAL), 171 to 191 (LYLL…LTNL), 198 to 216 (VMMT…FMGF), and 222 to 240 (VVLY…LLLL).

Belongs to the OXA1/ALB3/YidC family. Type 2 subfamily.

The protein resides in the cell membrane. Its function is as follows. Required for the insertion and/or proper folding and/or complex formation of integral membrane proteins into the membrane. Involved in integration of membrane proteins that insert both dependently and independently of the Sec translocase complex, as well as at least some lipoproteins. The polypeptide is Membrane protein insertase YidC 1 (Streptococcus pyogenes serotype M6 (strain ATCC BAA-946 / MGAS10394)).